The sequence spans 921 residues: Sodium/calcium exchanger 2 (921 aa).

The signal sequence occupies residues 1 to 20 (MAPLALVGVALLLGAPHCLG). The Extracellular segment spans residues 21–68 (EATPTPSLPPPPANDSDASPGGCQGSYRCQPGVLLPVWEPDDPSLGDK). Residues 23–42 (TPTPSLPPPPANDSDASPGG) form a disordered region. N-linked (GlcNAc...) asparagine glycosylation is present at asparagine 34. A helical transmembrane segment spans residues 69–90 (AARAVVYFVAMVYMFLGLSIIA). Topologically, residues 91–130 (DRFMASIEVITSKEKEITITKANGETSVGTVRIWNETVSN) are cytoplasmic. The chain crosses the membrane as a helical span at residues 131 to 152 (LTLMALGSSAPEILLSVIEVCG). The stretch at 135–175 (ALGSSAPEILLSVIEVCGHNFQAGELGPGTIVGSAAFNMFV) is one Alpha-1 repeat. At 153–164 (HNFQAGELGPGT) the chain is on the extracellular side. Residues 165–185 (IVGSAAFNMFVVIAVCVYVIP) traverse the membrane as a helical segment. Over 186-196 (AGESRKIKHLR) the chain is Cytoplasmic. Residues 197–219 (VFFVTASWSIFAYVWLYLILAVF) traverse the membrane as a helical segment. At 220 to 222 (SPG) the chain is on the extracellular side. The chain crosses the membrane as a helical span at residues 223 to 246 (VVQVWEALLTLVFFPVCVVFAWMA). The Cytoplasmic portion of the chain corresponds to 247 to 720 (DKRLLFYKYV…DGSREERLPS (474 aa)). Positions 248–267 (KRLLFYKYVYKRYRTDPRSG) are putative calmodulin-binding region. The interval 372 to 391 (AADAARRPGANDGAPDDEDD) is disordered. Calx-beta domains are found at residues 384 to 483 (GAPD…VRLL) and 512 to 612 (ATVT…IELG). 14 residues coordinate Ca(2+): glutamate 407, aspartate 443, aspartate 468, aspartate 469, isoleucine 471, glutamate 473, glutamate 476, aspartate 518, aspartate 519, aspartate 520, glutamate 536, aspartate 598, glutamate 599, and glutamate 600. Phosphoserine is present on serine 622. Glutamate 665 contacts Ca(2+). A helical membrane pass occupies residues 721 to 740 (CFDYVMHFLTVFWKVLFACL). The Extracellular segment spans residues 741 to 747 (PPTEYCH). A helical membrane pass occupies residues 748–770 (GWACFGVCILVIGLLTALIGDLA). At 771-772 (SH) the chain is on the cytoplasmic side. The helical transmembrane segment at 773–791 (FGCTVGLKDSVNAVVFVAL) threads the bilayer. The Alpha-2 repeat unit spans residues 790–826 (ALGTSIPDTFASKVAALQDQCADASIGNVTGSNAVNV). At 792 to 822 (GTSIPDTFASKVAALQDQCADASIGNVTGSN) the chain is on the extracellular side. Asparagine 817 carries an N-linked (GlcNAc...) asparagine glycan. The chain crosses the membrane as a helical span at residues 823 to 843 (AVNVFLGLGVAWSVAAVYWAV). Over 844–854 (QGRPFEVRTGT) the chain is Cytoplasmic. A helical membrane pass occupies residues 855-875 (LAFSVTLFTVFAFVGIAVLLY). The Extracellular portion of the chain corresponds to 876–892 (RRRPHIGGELGGPRGPK). The chain crosses the membrane as a helical span at residues 893-909 (LATTALFLGLWFLYILF). At 910-921 (ASLEAYCHIRGF) the chain is on the cytoplasmic side.

This sequence belongs to the Ca(2+):cation antiporter (CaCA) (TC 2.A.19) family. SLC8 subfamily. Detected in neocortex and hippocampus on pyramidal cells, astrocyte processes and dendrites (at protein level). Brain and skeletal muscle.

It is found in the cell membrane. It localises to the basolateral cell membrane. The protein localises to the perikaryon. Its subcellular location is the cell projection. The protein resides in the dendrite. It is found in the dendritic spine. The catalysed reaction is Ca(2+)(in) + 3 Na(+)(out) = Ca(2+)(out) + 3 Na(+)(in). Its activity is regulated as follows. Calcium transport is down-regulated by Na(+) and stimulated by Ca(2+). Functionally, mediates the electrogenic exchange of Ca(2+) against Na(+) ions across the cell membrane, and thereby contributes to the regulation of cytoplasmic Ca(2+) levels and Ca(2+)-dependent cellular processes. Contributes to cellular Ca(2+) homeostasis in excitable cells. Contributes to the rapid decrease of cytoplasmic Ca(2+) levels back to baseline after neuronal activation, and thereby contributes to modulate synaptic plasticity, learning and memory. Plays a role in regulating urinary Ca(2+) and Na(+) excretion. This Rattus norvegicus (Rat) protein is Sodium/calcium exchanger 2 (Slc8a2).